Consider the following 146-residue polypeptide: DNA protection during starvation protein 2 (146 aa).

3 residues coordinate Fe cation: histidine 27, aspartate 54, and glutamate 58.

It belongs to the Dps family. The 12 subunits form a hollow sphere into which the mineral iron core of up to 500 Fe(3+) can be deposited. Homododecamer.

It localises to the cytoplasm. The catalysed reaction is 2 Fe(2+) + H2O2 + 2 H(+) = 2 Fe(3+) + 2 H2O. Functionally, protects DNA from oxidative damage by sequestering intracellular Fe(2+) ion and storing it in the form of Fe(3+) oxyhydroxide mineral. One hydrogen peroxide oxidizes two Fe(2+) ions, which prevents hydroxyl radical production by the Fenton reaction. It is capable of binding and sequestering Fe(2+) ion. Does not bind DNA. This Bacillus anthracis protein is DNA protection during starvation protein 2 (dps2).